The chain runs to 673 residues: Protein-arginine deiminase type-2 (673 aa).

An N-acetylmethionine modification is found at Met1. Positions 131, 133, 135, 139, 162, 164, 166, 174, 177, 179, 185, and 188 each coordinate Ca(2+). A Citrulline modification is found at Arg352. Ca(2+) is bound by residues Glu362, Asp397, Phe416, Leu419, and Glu420. Residue Cys655 is the Nucleophile of the active site.

This sequence belongs to the protein arginine deiminase family. In terms of assembly, homodimer. It depends on Ca(2+) as a cofactor. As to expression, expressed in various tissues including muscle, uterus, spinal cord, salivary gland and pancreas.

It is found in the cytoplasm. It catalyses the reaction L-arginyl-[protein] + H2O = L-citrullyl-[protein] + NH4(+). In terms of biological role, catalyzes the deimination of arginine residues of proteins. The polypeptide is Protein-arginine deiminase type-2 (Padi2) (Mus musculus (Mouse)).